The primary structure comprises 236 residues: 3-oxoacyl-[acyl-carrier-protein] reductase (236 aa).

Met1 is modified (N-acetylmethionine). NADP(+) contacts are provided by residues 11-14 (SRGI) and 34-35 (RN). The residue at position 40 (Lys40) is an N6-acetyllysine. Residue 83–85 (AAG) participates in NADP(+) binding. Lys96 carries the N6-acetyllysine modification. A substrate-binding site is contributed by Ser134. NADP(+) is bound by residues Tyr147, Lys151, and 180-182 (IHT). Tyr147 serves as the catalytic Proton acceptor. Lys194 is modified (N6-acetyllysine).

Belongs to the short-chain dehydrogenases/reductases (SDR) family. As to quaternary structure, homotetramer (in vitro). Heterotetramer with HSD17B8; contains two molecules each of HSD17B8 and CBR4. Does not form homotetramers when HSD17B8 is coexpressed, only heterotetramers (in vitro).

The protein resides in the mitochondrion matrix. The enzyme catalyses a (3R)-hydroxyacyl-[ACP] + NADP(+) = a 3-oxoacyl-[ACP] + NADPH + H(+). It carries out the reaction a quinone + NADPH + H(+) = a quinol + NADP(+). It participates in lipid metabolism; fatty acid biosynthesis. Functionally, component of the heterotetramer complex KAR (3-ketoacyl-[acyl carrier protein] reductase or 3-ketoacyl-[ACP] reductase) that forms part of the mitochondrial fatty acid synthase (mtFAS). Beta-subunit of the KAR heterotetramer complex, responsible for the 3-ketoacyl-ACP reductase activity of the mtFAS, reduces 3-oxoacyl-[ACP] to (3R)-hydroxyacyl-[ACP] in a NADPH-dependent manner with no chain length preference, thereby participating in mitochondrial fatty acid biosynthesis. The homotetramer has NADPH-dependent quinone reductase activity (in vitro), hence could play a role in protection against cytotoxicity of exogenous quinones. As a heterotetramer, it can also reduce 9,10-phenanthrenequinone, 1,4-benzoquinone and various other o-quinones and p-quinones (in vitro). The sequence is that of 3-oxoacyl-[acyl-carrier-protein] reductase (Cbr4) from Rattus norvegicus (Rat).